The primary structure comprises 470 residues: Uronate isomerase (470 aa).

This sequence belongs to the metallo-dependent hydrolases superfamily. Uronate isomerase family.

It catalyses the reaction D-glucuronate = D-fructuronate. The catalysed reaction is aldehydo-D-galacturonate = keto-D-tagaturonate. It functions in the pathway carbohydrate metabolism; pentose and glucuronate interconversion. In Salmonella heidelberg (strain SL476), this protein is Uronate isomerase.